Reading from the N-terminus, the 723-residue chain is LIM domain-binding protein 3 (723 aa).

Residues Met1 to Lys84 form the PDZ domain. Residues Ser44, Ser98, and Asp112 each carry the phosphoserine modification. Disordered stretches follow at residues Ile89–Glu134 and Ser164–Asn193. The residue at position 119 (Thr119) is a Phosphothreonine. Phosphoserine occurs at positions 121 and 123. A Phosphoserine modification is found at Ser214. At Arg216 the chain carries Omega-N-methylarginine. Residues Ser220, Ser251, and Asp288 each carry the phosphoserine modification. Disordered regions lie at residues Gly280–Thr423 and Ser436–Thr525. Ala291 bears the Omega-N-methylarginine mark. Over residues Ala309 to Ala376 the composition is skewed to low complexity. Ile327 carries the phosphoserine modification. The residue at position 330 (Ser330) is an Omega-N-methylarginine. A compositionally biased stretch (pro residues) spans Ser436 to Thr466. The span at Asp490–Thr509 shows a compositional bias: polar residues. 2 positions are modified to omega-N-methylarginine: Arg512 and Arg529. LIM zinc-binding domains lie at Pro545–Ala603, Pro604–Thr663, and Lys664–Val723.

As to quaternary structure, interacts via its LIM domains with various PKC isoforms. Interacts via its PDZ domain with the ACTN2 C-terminal region. Interacts with MYOZ1, MYOZ2 and MYOZ3. Expressed primarily in adult heart and skeletal muscle, and detected at lower levels in lung. Isoforms are expressed in a tissue-specific manner. Isoform 1, isoform 3 and isoform 5 are expressed in heart, whereas isoform 2, isoform 4 and isoform 6 are expressed in skeletal muscle.

The protein localises to the cytoplasm. It localises to the perinuclear region. The protein resides in the cell projection. Its subcellular location is the pseudopodium. It is found in the cytoskeleton. The protein localises to the myofibril. It localises to the sarcomere. The protein resides in the z line. May function as an adapter in striated muscle to couple protein kinase C-mediated signaling via its LIM domains to the cytoskeleton. In Mus musculus (Mouse), this protein is LIM domain-binding protein 3.